A 221-amino-acid chain; its full sequence is Sugar transporter SWEET1 (221 aa).

Transmembrane regions (helical) follow at residues 3 to 23, 42 to 62, 68 to 88, 96 to 116, 129 to 149, 160 to 180, and 186 to 206; these read AGGFLDSLIYGACVVFTLGMF, VQFLPFLTTEVNNLGWLSYGA, ILIVVNTVGAALQTLYILAYL, VVLLQTATLLGVLLLGYGYFW, LGLFCSVFTISMYLSPLADLA, LSYPLTIATLLTSASWCLYGF, and YIMVSNFPGIVTSFIRFWLFW. Positions 10-94 constitute a MtN3/slv 1 domain; it reads LIYGACVVFT…LAYLHYCPRK (85 aa). The MtN3/slv 2 domain occupies 127–212; sequence QQLGLFCSVF…WLFWKYPQEQ (86 aa). The tract at residues 149–221 is mediates interaction with TRPV2; sequence AKVIQTKSTQ…QDRNYWLLQT (73 aa).

It belongs to the SWEET sugar transporter family. In terms of assembly, interacts with TRPV2; the interaction probably occurs intracellularly and depends on TRPV2 N-glycosylation. Ubiquitously expressed with highest expression in oviduct, epididymis and intestine.

Its subcellular location is the golgi apparatus membrane. The protein resides in the cell membrane. In terms of biological role, mediates sugar transport across membranes. May stimulate V(D)J recombination by the activation of RAG1. The protein is Sugar transporter SWEET1 (SLC50A1) of Homo sapiens (Human).